A 198-amino-acid chain; its full sequence is Ribonuclease HII (198 aa).

The 189-residue stretch at 10–198 (QLVAGVDEVG…PVKRALGLAS (189 aa)) folds into the RNase H type-2 domain. Residues D16, E17, and D108 each coordinate a divalent metal cation.

This sequence belongs to the RNase HII family. Mn(2+) serves as cofactor. It depends on Mg(2+) as a cofactor.

The protein localises to the cytoplasm. The enzyme catalyses Endonucleolytic cleavage to 5'-phosphomonoester.. Its function is as follows. Endonuclease that specifically degrades the RNA of RNA-DNA hybrids. The protein is Ribonuclease HII of Shigella boydii serotype 4 (strain Sb227).